Reading from the N-terminus, the 238-residue chain is SH2 domain-containing adapter protein F (238 aa).

Disordered stretches follow at residues 1-70 and 85-121; these read MEPY…PWEW and GSEN…EPSS. The residue at position 39 (Ser39) is a Phosphoserine. The segment covering 55-66 has biased composition (acidic residues); it reads EDDERPPEEYDQ. Tyr64 is subject to Phosphotyrosine. The 96-residue stretch at 138 to 233 folds into the SH2 domain; it reads WYHGAISRTD…AEHMSLLYPV (96 aa).

In terms of assembly, interacts with phosphorylated 'Tyr-720' of PDGFRA via its SH2 domain. May become phosphorylated upon binding to PDGFRA.

Functionally, adapter protein which may play a role in the regulation of apoptosis in response to PDGF. The protein is SH2 domain-containing adapter protein F of Mus musculus (Mouse).